The sequence spans 485 residues: Noelin (485 aa).

Positions 1–16 (MSVPLLKIGVVLSTMA) are cleaved as a signal peptide. Residues asparagine 33, asparagine 103, asparagine 187, asparagine 288, asparagine 307, asparagine 394, asparagine 431, and asparagine 473 are each glycosylated (N-linked (GlcNAc...) asparagine). The stretch at 87–225 (RDARTKQLRQ…ERLRACMQKL (139 aa)) forms a coiled coil. The region spanning 226–478 (ACGKLTGISD…QILYNVTLFH (253 aa)) is the Olfactomedin-like domain. Cysteine 227 and cysteine 409 are oxidised to a cystine.

In terms of assembly, homotetramer; disulfide-linked. Dimer of dimers, giving rise to a V-shaped homotretramer. Component of the AMPAR complex. Glycosylated.

The protein localises to the secreted. It is found in the synapse. It localises to the endoplasmic reticulum. Its subcellular location is the cell projection. The protein resides in the axon. The protein localises to the perikaryon. In terms of biological role, contributes to the regulation of axonal growth. May play an important role in regulating the production of neural crest cells by the neural tube. This is Noelin (OLFM1) from Gallus gallus (Chicken).